Here is a 610-residue protein sequence, read N- to C-terminus: Elongation factor 4 (610 aa).

In terms of domain architecture, tr-type G spans 11 to 193 (EKIRNFSIIA…QIVEKVPAPT (183 aa)). GTP contacts are provided by residues 23–28 (DHGKST) and 140–143 (NKID).

This sequence belongs to the TRAFAC class translation factor GTPase superfamily. Classic translation factor GTPase family. LepA subfamily.

It localises to the cell membrane. The catalysed reaction is GTP + H2O = GDP + phosphate + H(+). In terms of biological role, required for accurate and efficient protein synthesis under certain stress conditions. May act as a fidelity factor of the translation reaction, by catalyzing a one-codon backward translocation of tRNAs on improperly translocated ribosomes. Back-translocation proceeds from a post-translocation (POST) complex to a pre-translocation (PRE) complex, thus giving elongation factor G a second chance to translocate the tRNAs correctly. Binds to ribosomes in a GTP-dependent manner. In Streptococcus agalactiae serotype Ia (strain ATCC 27591 / A909 / CDC SS700), this protein is Elongation factor 4.